Consider the following 268-residue polypeptide: Energy-coupling factor transporter transmembrane protein EcfT (268 aa).

5 helical membrane passes run 26–46 (IVTF…TYAW), 72–92 (IFWL…GTPI), 106–126 (ILNA…STIL), 149–169 (IGVP…FVPL), and 247–267 (VAFA…TWLH).

This sequence belongs to the energy-coupling factor EcfT family. Forms a stable energy-coupling factor (ECF) transporter complex composed of 2 membrane-embedded substrate-binding proteins (S component), 2 ATP-binding proteins (A component) and 2 transmembrane proteins (T component). May be able to interact with more than 1 S component at a time.

It localises to the cell membrane. In terms of biological role, transmembrane (T) component of an energy-coupling factor (ECF) ABC-transporter complex. Unlike classic ABC transporters this ECF transporter provides the energy necessary to transport a number of different substrates. This Leuconostoc gelidum subsp. gasicomitatum (strain DSM 15947 / CCUG 46042 / CECT 5767 / JCM 12535 / LMG 18811 / NBRC 113245 / TB1-10) (Leuconostoc gasicomitatum) protein is Energy-coupling factor transporter transmembrane protein EcfT.